The chain runs to 987 residues: UPF0182 protein DIP0733 (987 aa).

A run of 7 helical transmembrane segments spans residues 19–39 (LTWLIPLLMILGALVPTVVDL), 63–83 (IGLFVGFGLLAGIVTFLAGWF), 115–135 (FLVVLPVVIGIAAGFLGQQAW), 176–196 (SVLLVVAFLIALVGHYLLGGI), 212–234 (YAKVQLAVTGGLYLLVRMASYWL), 261–281 (AKIVLLVISAVVAISFFSVIV), and 290–310 (ISTVLMIVSSLAIGNAWPIMM). Positions 904–927 (DLGEAKGLKPESQNRDKPEDKEGK) are enriched in basic and acidic residues. Positions 904–950 (DLGEAKGLKPESQNRDKPEDKEGKAPSTPSAPASGSGTTGEAIGKIN) are disordered. Low complexity predominate over residues 928–943 (APSTPSAPASGSGTTG).

Belongs to the UPF0182 family.

The protein localises to the cell membrane. The protein is UPF0182 protein DIP0733 of Corynebacterium diphtheriae (strain ATCC 700971 / NCTC 13129 / Biotype gravis).